The primary structure comprises 349 residues: Leukotriene B4 receptor 1 (349 aa).

At 1–19 the chain is on the extracellular side; it reads MNTTSPAAPSSSGVSFISL. Asparagine 2 is a glycosylation site (N-linked (GlcNAc...) asparagine). Residues 20–42 form a helical membrane-spanning segment; that stretch reads LVIIVLSVALAVGLPGNSFVVWS. The Cytoplasmic segment spans residues 43 to 54; that stretch reads ILAKLRKRSVTA. The chain crosses the membrane as a helical span at residues 55 to 75; the sequence is LMVLHLALADLAVLLTAPFFL. Topologically, residues 76–91 are extracellular; sequence YSVAQGTWTFGLSSCR. The helical transmembrane segment at 92–113 threads the bilayer; the sequence is LFHYVCGVSMYASVLLIMTMSL. The Cytoplasmic portion of the chain corresponds to 114–138; sequence DRSLAVALPFVSQKLRTKAVAWRVL. The helical transmembrane segment at 139–159 threads the bilayer; sequence AGIWVMSVLLATPVLLYRTVH. Topologically, residues 160-179 are extracellular; the sequence is LGLNNRSLTCFLKYPSERHR. Asparagine 164 is a glycosylation site (N-linked (GlcNAc...) asparagine). The chain crosses the membrane as a helical span at residues 180–200; that stretch reads AFHLFFEVITGFLLPFLVVVA. At 201 to 222 the chain is on the cytoplasmic side; sequence SYCDIGRRLRARRFRRSRRTGR. The chain crosses the membrane as a helical span at residues 223–243; that stretch reads LVALIILAFAAFWLPYHVVNL. At 244–269 the chain is on the extracellular side; the sequence is AEGFRAAAGKALGSGPVGRRLLLARH. The helical transmembrane segment at 270–290 threads the bilayer; sequence VLITLAFLSSSVNPLLYACAG. The Cytoplasmic segment spans residues 291-349; it reads GGLLRSAGVGFIAKLLEGTGSETSSSRRKGTLAQTLRGTPASPEPDPAESLTASTNPLE. The tract at residues 311–349 is disordered; it reads SETSSSRRKGTLAQTLRGTPASPEPDPAESLTASTNPLE.

This sequence belongs to the G-protein coupled receptor 1 family. Post-translationally, phosphorylated by GRK6 upon leukotriene B4 binding; which promotes desensitization.

The protein localises to the cell membrane. Its function is as follows. Receptor for extracellular ATP &gt; UTP and ADP. The activity of this receptor is mediated by G proteins which activate a phosphatidylinositol-calcium second messenger system. May be the cardiac P2Y receptor involved in the regulation of cardiac muscle contraction through modulation of L-type calcium currents. Is a receptor for leukotriene B4, a potent chemoattractant involved in inflammation and immune response. The chain is Leukotriene B4 receptor 1 (LTB4R) from Bos taurus (Bovine).